Consider the following 204-residue polypeptide: Large ribosomal subunit protein eL15y (204 aa).

Belongs to the eukaryotic ribosomal protein eL15 family.

This chain is Large ribosomal subunit protein eL15y (SB62), found in Picea mariana (Black spruce).